Consider the following 475-residue polypeptide: Ribulose bisphosphate carboxylase large chain (475 aa).

A propeptide spanning residues 1–2 (MS) is cleaved from the precursor. N-acetylproline is present on Pro-3. Position 14 is an N6,N6,N6-trimethyllysine (Lys-14). Substrate is bound by residues Asn-123 and Thr-173. Lys-175 (proton acceptor) is an active-site residue. Lys-177 contributes to the substrate binding site. Lys-201, Asp-203, and Glu-204 together coordinate Mg(2+). An N6-carboxylysine modification is found at Lys-201. His-294 (proton acceptor) is an active-site residue. The substrate site is built by Arg-295, His-327, and Ser-379.

The protein belongs to the RuBisCO large chain family. Type I subfamily. Heterohexadecamer of 8 large chains and 8 small chains; disulfide-linked. The disulfide link is formed within the large subunit homodimers. Mg(2+) serves as cofactor. The disulfide bond which can form in the large chain dimeric partners within the hexadecamer appears to be associated with oxidative stress and protein turnover.

The protein resides in the plastid. It is found in the chloroplast. The enzyme catalyses 2 (2R)-3-phosphoglycerate + 2 H(+) = D-ribulose 1,5-bisphosphate + CO2 + H2O. The catalysed reaction is D-ribulose 1,5-bisphosphate + O2 = 2-phosphoglycolate + (2R)-3-phosphoglycerate + 2 H(+). In terms of biological role, ruBisCO catalyzes two reactions: the carboxylation of D-ribulose 1,5-bisphosphate, the primary event in carbon dioxide fixation, as well as the oxidative fragmentation of the pentose substrate in the photorespiration process. Both reactions occur simultaneously and in competition at the same active site. This is Ribulose bisphosphate carboxylase large chain from Populus trichocarpa (Western balsam poplar).